The chain runs to 1112 residues: Electrogenic sodium bicarbonate cotransporter 4 (1112 aa).

Residues 1–13 (MKVEEKAGVKKLE) are compositionally biased toward basic and acidic residues. Disordered regions lie at residues 1–80 (MKVE…SSLG), 220–255 (KKPI…HHST), and 439–469 (GRSG…NEAE). Over 1 to 513 (MKVEEKAGVK…DFYDGFHIQS (513 aa)) the chain is Cytoplasmic. Composition is skewed to polar residues over residues 53–67 (QRVQ…SQQD) and 233–244 (SVSTTNRSSARS). The span at 444–465 (SAGGGGSGGGAGGSGAGGGGSG) shows a compositional bias: gly residues. A helical transmembrane segment spans residues 514–536 (ISAVLFIYLGCITNAITFGGLLG). Topologically, residues 537–547 (DATDNYQGVME) are extracellular. The chain crosses the membrane as a helical span at residues 548-579 (SFLGTAMAGSLFCLFSGQPLIILSSTGPILIF). Residues 580–598 (EKLLFDFSKANGLDYMEFR) are Cytoplasmic-facing. The chain crosses the membrane as a helical span at residues 599-620 (LWIGLHSAIQCLILVATDASFI). Over 621 to 734 (IKYITRFTEE…LGSSCQFVPD (114 aa)) the chain is Extracellular. The chain crosses the membrane as a helical span at residues 735-753 (LALMSFILFFGTYSMTLTL). Over 754-772 (KKFKFSRYFPTKVRTLVAD) the chain is Cytoplasmic. A helical membrane pass occupies residues 773-792 (FSIVFSILLFCGIDACFGLQ). The Extracellular segment spans residues 793–820 (TPKLHVPNVIKPTRPDRGWFVAPFGKNP). A helical transmembrane segment spans residues 821 to 839 (WWVYPASILPALLVTILIF). Residues 840 to 858 (MDQQITAVIVNRKENKLRK) lie on the Cytoplasmic side of the membrane. The chain crosses the membrane as a helical span at residues 859-875 (AAGYHLDLFWVGILMAL). Residues 876 to 880 (CSFMG) lie on the Extracellular side of the membrane. A helical membrane pass occupies residues 881–900 (LPWYVAATVISIAHIDSLKM). Residues 901–920 (ETETSAPGEQPQFLGVREQR) lie on the Cytoplasmic side of the membrane. The chain crosses the membrane as a helical span at residues 921 to 940 (VTGVMVFILTGISVFLAPIL). The Extracellular portion of the chain corresponds to 941 to 945 (KYIPM). Residues 946-966 (PVLYGVFLYMGVASLNGIQFW) form a helical membrane-spanning segment. The Cytoplasmic portion of the chain corresponds to 967–992 (DRCKLFLMPAKHQPDHAFLRHVPLRR). Residues 993 to 1010 (IHLFTLVQILCLALLWIL) traverse the membrane as a helical segment. At 1011–1015 (KSTMA) the chain is on the extracellular side. The helical transmembrane segment at 1016–1033 (AIIFPVMILGLIIVRRLL) threads the bilayer. Topologically, residues 1034–1112 (DLIFSQHDLA…KRSSSWSHSL (79 aa)) are cytoplasmic. A compositionally biased stretch (basic and acidic residues) spans 1055-1074 (KESDRKKRRKEVHENTDKEP). A disordered region spans residues 1055–1112 (KESDRKKRRKEVHENTDKEPQFLPPSVVKIPMEGIPSDPQNGIHCVGRKRSSSWSHSL).

This sequence belongs to the anion exchanger (TC 2.A.31) family. As to expression, observed in hepatocytes and in the apical region of bile duct intrahepatic cholangiocytes of liver. Also observed in uroepithelium cells lining the outer pelvic wall of the kidney (at protein level). Highly expressed in colon, distal colon, liver, kidney and testis. Moderate expression in duodenum and stomach and weak expression in heart. In kidney, very weakly expressed in the inner medulla, but abundantly expressed in cortex and outer medulla in the medullary thick ascending and cortical thick ascending limbs of the loop of Henle.

The protein localises to the basolateral cell membrane. Its subcellular location is the apical cell membrane. The catalysed reaction is 2 hydrogencarbonate(out) + Na(+)(out) = 2 hydrogencarbonate(in) + Na(+)(in). The enzyme catalyses 3 hydrogencarbonate(out) + Na(+)(out) = 3 hydrogencarbonate(in) + Na(+)(in). Mediates sodium- and bicarbonate-dependent electrogenic sodium bicarbonate cotransport, with a Na(+):HCO3(-) stoichiometry varying from 1:2 to 1:3. The sequence is that of Electrogenic sodium bicarbonate cotransporter 4 from Rattus norvegicus (Rat).